A 105-amino-acid polypeptide reads, in one-letter code: Small ribosomal subunit protein uS10 (105 aa).

This sequence belongs to the universal ribosomal protein uS10 family. Part of the 30S ribosomal subunit.

Its function is as follows. Involved in the binding of tRNA to the ribosomes. The polypeptide is Small ribosomal subunit protein uS10 (Aster yellows witches'-broom phytoplasma (strain AYWB)).